The sequence spans 188 residues: F-box only protein 36 (188 aa).

The region spanning 91–137 (FDFLERLSDDLLLNIISYLDLEDIARLCQTSHRFAKLCMSDKLWEQI) is the F-box domain.

Directly interacts with SKP1 and CUL1.

In terms of biological role, substrate-recognition component of the SCF (SKP1-CUL1-F-box protein)-type E3 ubiquitin ligase complex. The protein is F-box only protein 36 (FBXO36) of Pongo abelii (Sumatran orangutan).